Here is a 359-residue protein sequence, read N- to C-terminus: Ribosomal RNA small subunit methyltransferase H (359 aa).

S-adenosyl-L-methionine is bound by residues 39–41 (AGH), aspartate 58, phenylalanine 87, aspartate 108, and glutamine 115. The interval 339 to 359 (IQGSASPGRAKNTARIRTRRG) is disordered. The segment covering 350-359 (NTARIRTRRG) has biased composition (basic residues).

Belongs to the methyltransferase superfamily. RsmH family.

It localises to the cytoplasm. It carries out the reaction cytidine(1402) in 16S rRNA + S-adenosyl-L-methionine = N(4)-methylcytidine(1402) in 16S rRNA + S-adenosyl-L-homocysteine + H(+). Its function is as follows. Specifically methylates the N4 position of cytidine in position 1402 (C1402) of 16S rRNA. The chain is Ribosomal RNA small subunit methyltransferase H from Bifidobacterium longum (strain DJO10A).